We begin with the raw amino-acid sequence, 322 residues long: Sulfate adenylyltransferase subunit 2 (322 aa).

This sequence belongs to the PAPS reductase family. CysD subfamily. As to quaternary structure, heterodimer composed of CysD, the smaller subunit, and CysN.

The catalysed reaction is sulfate + ATP + H(+) = adenosine 5'-phosphosulfate + diphosphate. Its pathway is sulfur metabolism; hydrogen sulfide biosynthesis; sulfite from sulfate: step 1/3. Functionally, with CysN forms the ATP sulfurylase (ATPS) that catalyzes the adenylation of sulfate producing adenosine 5'-phosphosulfate (APS) and diphosphate, the first enzymatic step in sulfur assimilation pathway. APS synthesis involves the formation of a high-energy phosphoric-sulfuric acid anhydride bond driven by GTP hydrolysis by CysN coupled to ATP hydrolysis by CysD. The sequence is that of Sulfate adenylyltransferase subunit 2 from Bradyrhizobium sp. (strain BTAi1 / ATCC BAA-1182).